A 403-amino-acid polypeptide reads, in one-letter code: MNKINIKKVVLAYSGGLDTSIIVKWLQDTYRCEVVTFTADIGQGEEVELARTKAKAAGVKEVYIENLREEFVRDFVFPMFRANAIYEGEYLLGTSIARPLISKRLVEIAHQEDADAISHGATGKGNDQVRFELNAYALDADIQVIAPWREWDLSSRESLMDYAQKHGIEIDYKKQLKKSPYSMDANLLHISYEGGILEDPWAEPEEDMWRWTVSPENAPNKAEYVEITFKKGGIIAINGKTMSPASVMEDLNKRAGAHGIGRNDIVENRFVGMKSRGCYETPAGTVMLKAHRAMESLTLDQAAAHLKDELMPKYAEMVYNGFWFAPERKMLQAAIDNTQEIVNGIVRLKFYKGNVTVVGRQSKDSLFSEKIATFEDDEGAYNQKDAAGFIKLNALRLRLKALK.

Residues 12–20 (AYSGGLDTS) and A39 contribute to the ATP site. Residues Y90 and S95 each coordinate L-citrulline. Residue G120 coordinates ATP. L-aspartate-binding residues include T122, N126, and D127. N126 is a binding site for L-citrulline. 5 residues coordinate L-citrulline: R130, S182, S191, E267, and Y279.

This sequence belongs to the argininosuccinate synthase family. Type 1 subfamily. In terms of assembly, homotetramer.

The protein localises to the cytoplasm. The enzyme catalyses L-citrulline + L-aspartate + ATP = 2-(N(omega)-L-arginino)succinate + AMP + diphosphate + H(+). It participates in amino-acid biosynthesis; L-arginine biosynthesis; L-arginine from L-ornithine and carbamoyl phosphate: step 2/3. The sequence is that of Argininosuccinate synthase from Ruthia magnifica subsp. Calyptogena magnifica.